Consider the following 71-residue polypeptide: Phosphatidylinositol N-acetylglucosaminyltransferase subunit Y (71 aa).

The Cytoplasmic portion of the chain corresponds to 1 to 3 (MFL). A helical membrane pass occupies residues 4 to 26 (SLPTLTVLIPLVSLAGLFYSASV). Over 27–44 (EENFPQGCTSTASLCFYS) the chain is Lumenal. A helical membrane pass occupies residues 45–65 (LLLPITIPVYVFFHLWTWMGI). Topologically, residues 66-71 (KLFRHN) are cytoplasmic.

In terms of assembly, component of the glycosylphosphatidylinositol-N-acetylglucosaminyltransferase (GPI-GnT) complex composed at least by PIGA, PIGC, PIGH, PIGP, PIGQ, PIGY and DPM2. Interacts directly with PIGA; this interaction regulates glycosylphosphatidylinositol-N-acetylglucosaminyltransferase activity. Does not interact with Ras proteins.

Its subcellular location is the endoplasmic reticulum membrane. The protein operates within glycolipid biosynthesis; glycosylphosphatidylinositol-anchor biosynthesis. Its function is as follows. Part of the glycosylphosphatidylinositol-N-acetylglucosaminyltransferase (GPI-GnT) complex that catalyzes the transfer of N-acetylglucosamine from UDP-N-acetylglucosamine to phosphatidylinositol and participates in the first step of GPI biosynthesis. May act by regulating the catalytic subunit PIGA. This is Phosphatidylinositol N-acetylglucosaminyltransferase subunit Y from Homo sapiens (Human).